Here is a 438-residue protein sequence, read N- to C-terminus: Enolase (438 aa).

H159 and E168 together coordinate substrate. The active-site Proton donor is the E211. Positions 246, 297, and 322 each coordinate Mg(2+). Substrate-binding residues include E297 and D322. The Proton acceptor role is filled by K347. Substrate contacts are provided by residues S374–S377 and K398.

This sequence belongs to the enolase family. Homodimer. Mg(2+) is required as a cofactor.

It localises to the cytoplasm. The enzyme catalyses (2R)-2-phosphoglycerate = phosphoenolpyruvate + H2O. It participates in carbohydrate degradation; glycolysis; pyruvate from D-glyceraldehyde 3-phosphate: step 4/5. Functionally, involved in osmoadaptation. The protein is Enolase (enoA) of Emericella nidulans (strain FGSC A4 / ATCC 38163 / CBS 112.46 / NRRL 194 / M139) (Aspergillus nidulans).